The sequence spans 99 residues: Ragulator complex protein LAMTOR4 (99 aa).

At Met-1 the chain carries N-acetylmethionine. Thr-2 is modified (N-acetylthreonine; in Ragulator complex protein LAMTOR4, N-terminally processed). Ser-67 bears the Phosphoserine; by PKA mark.

The protein belongs to the LAMTOR4 family. As to quaternary structure, part of the Ragulator complex composed of LAMTOR1, LAMTOR2, LAMTOR3, LAMTOR4 and LAMTOR5. LAMTOR4 and LAMTOR5 form a heterodimer that interacts, through LAMTOR1, with a LAMTOR2, LAMTOR3 heterodimer. The Ragulator complex interacts with both the mTORC1 complex and heterodimers constituted of the Rag GTPases RagA/RRAGA, RagB/RRAGB, RagC/RRAGC and RagD/RRAGD; regulated by amino acid availability. The Ragulator complex interacts with SLC38A9; the probable amino acid sensor. Component of the lysosomal folliculin complex (LFC), composed of FLCN, FNIP1 (or FNIP2), RagA/RRAGA or RagB/RRAGB GDP-bound, RagC/RRAGC or RagD/RRAGD GTP-bound, and Ragulator. Phosphorylation at Ser-67 by PKA inhibits Ragulator complex assembly.

Its subcellular location is the lysosome. Functionally, as part of the Ragulator complex it is involved in amino acid sensing and activation of mTORC1, a signaling complex promoting cell growth in response to growth factors, energy levels, and amino acids. Activated by amino acids through a mechanism involving the lysosomal V-ATPase, the Ragulator plays a dual role for the small GTPases Rag (RagA/RRAGA, RagB/RRAGB, RagC/RRAGC and/or RagD/RRAGD): it (1) acts as a guanine nucleotide exchange factor (GEF), activating the small GTPases Rag and (2) mediates recruitment of Rag GTPases to the lysosome membrane. Activated Ragulator and Rag GTPases function as a scaffold recruiting mTORC1 to lysosomes where it is in turn activated. This Homo sapiens (Human) protein is Ragulator complex protein LAMTOR4.